Consider the following 1439-residue polypeptide: Probable histone acetyltransferase HAC-like 2 (1439 aa).

2 disordered regions span residues 1–43 (MKQG…ASAD) and 313–335 (YGIS…TPTP). Over residues 325–335 (VNPSTRSTPTP) the composition is skewed to polar residues. The TAZ-type zinc finger occupies 607-687 (ENTKQYHAQA…NEHCHVCCKA (81 aa)). The PHD-type; degenerate zinc-finger motif lies at 827 to 933 (KIHCHVQQET…EYTCFKCYIE (107 aa)). Positions 948–1383 (VRGAKDLPRT…MLYHLHNPTG (436 aa)) constitute a CBP/p300-type HAT domain. A coiled-coil region spans residues 964–989 (EERLFKRLREERQERANKLKTSLDEV). Acetyl-CoA is bound by residues 1071–1073 (LDS), 1090–1091 (RT), and Trp1146. The ZZ-type zinc finger occupies 1265-1328 (HLQYSCSHCC…ILHPVEIVGV (64 aa)). Zn(2+) is bound by residues Cys1270, Cys1273, Cys1285, Cys1288, Cys1294, Cys1297, His1310, and His1318.

The protein localises to the nucleus. The catalysed reaction is L-lysyl-[protein] + acetyl-CoA = N(6)-acetyl-L-lysyl-[protein] + CoA + H(+). Functionally, acetyltransferase enzyme. Acetylates histones, giving a specific tag for transcriptional activation. This is Probable histone acetyltransferase HAC-like 2 from Oryza sativa subsp. japonica (Rice).